A 715-amino-acid polypeptide reads, in one-letter code: Metastasis-associated protein MTA1 (715 aa).

In terms of domain architecture, BAH spans Met1–Lys164. In terms of domain architecture, ELM2 spans Gly165–Gly276. Residue Lys182 forms a Glycyl lysine isopeptide (Lys-Gly) (interchain with G-Cter in ubiquitin) linkage. The 53-residue stretch at Asp283–Arg335 folds into the SANT domain. Ser386 is subject to Phosphoserine. The GATA-type; atypical zinc finger occupies Cys393 to Cys420. The tract at residues Asp437 to Ser460 is disordered. Position 449 is a phosphoserine (Ser449). Lys509 participates in a covalent cross-link: Glycyl lysine isopeptide (Lys-Gly) (interchain with G-Cter in SUMO2 and SUMO3). Ser522 is subject to Phosphoserine. Over residues Glu542–Pro552 the composition is skewed to basic and acidic residues. The segment at Glu542–Gly590 is disordered. The SH3-binding signature appears at Pro545 to Pro552. Lys549 is covalently cross-linked (Glycyl lysine isopeptide (Lys-Gly) (interchain with G-Cter in SUMO2)). The segment covering Val553 to Pro565 has biased composition (low complexity). Thr564 is modified (phosphothreonine). Ser576 is modified (phosphoserine). Thr578 carries the post-translational modification Phosphothreonine. An N6-acetyllysine; alternate modification is found at Lys626. Residue Lys626 forms a Glycyl lysine isopeptide (Lys-Gly) (interchain with G-Cter in ubiquitin); alternate linkage. Phosphoserine is present on Ser639. An interaction with RBBP4 region spans residues Asp656–Lys686. The disordered stretch occupies residues Ser673–Asp715. The SH3-binding motif lies at Leu696–Pro705. An SUMO interaction motif 1 (SIM); crucial for efficient sumoylation motif is present at residues Ile711 to Asp715.

The protein belongs to the metastasis-associated protein family. As to quaternary structure, component of the nucleosome remodeling and deacetylase (NuRD) repressor complex, composed of core proteins MTA1, MTA2, MTA3, RBBP4, RBBP7, HDAC1, HDAC2, MBD2, MBD3, and peripherally associated proteins CDK2AP1, CDK2AP2, GATAD2A, GATAD2B, CHD3, CHD4 and CHD5. The exact stoichiometry of the NuRD complex is unknown, and some subunits such as MBD2 and MBD3, GATAD2A and GATAD2B, and CHD3, CHD4 and CHD5 define mutually exclusive NuRD complexes. Interacts with RBBP4; the interaction is direct. Interacts with BMAL1. Interacts with CLOCK. Interacts with COP1. Interacts with CSNK1G2 in the cytoplasm. Interacts with EP300. Interacts with HDAC2. Interacts with ITGB3BP/CENPR. Interacts with MBD3L2. Interacts with MDM2. Interacts with NACC2. Interacts with p53/TP53. Interacts with PIAS1. Interacts with PIAS3. Interacts with PIAS4. Interacts with PWWP2A. Interacts with PWWP2B. Interacts with SENP1. Interacts with SENP2. Interacts with SIX3; facilitates the binding of SIX3 to the core DNA motif of SIX3 promoter. Interacts with SUMO1. Interacts with SUMO2. Interacts with TFCP2L1; which is indispensable for TFCP2L1-mediated self-renewal-promoting effect and endoderm-inhibiting action. Interacts with TFAP2C. Interacts with TPR. Interacts with UBE2I/UBC9. Phosphorylation by CSNK1G2/CK1 triggered by estrogen enhances corepression of estrogen receptor (ER). Post-translationally, acetylation is essential for its transcriptional coactivator activity. In terms of processing, sumoylation positively regulates its transcriptional corepressor activity but does not affect the protein stability. Sumoylated preferentially by SUMO2 or SUMO3 than SUMO1. Sumoylation is enhanced by PIAS1/3/4 and preferentially sumoylated by SUMO2 in the presence of PIAS1/3/4. Desumoylated by SENP1. Ubiquitinated by COP1, which leads to proteasomal degradation. In terms of tissue distribution, widely expressed but not in skeletal muscle. Highly expressed in the brain, liver, kidney and cardiac muscle and in mammary tumors.

The protein localises to the nucleus. The protein resides in the nucleus envelope. It is found in the cytoplasm. It localises to the cytoskeleton. Transcriptional coregulator which can act as both a transcriptional corepressor and coactivator. Acts as a component of the histone deacetylase NuRD complex which participates in the remodeling of chromatin. In the NuRD complex, regulates transcription of its targets by modifying the acetylation status of the target chromatin and cofactor accessibility to the target DNA. In conjunction with other components of NuRD, acts as a transcriptional corepressor of BRCA1, ESR1, TFF1 and CDKN1A. Acts as a transcriptional coactivator of BCAS3, PAX5 and SUMO2, independent of the NuRD complex. Stimulates the expression of WNT1 by inhibiting the expression of its transcriptional corepressor SIX3. Regulates p53-dependent and -independent DNA repair processes following genotoxic stress. Regulates the stability and function of p53/TP53 by inhibiting its ubiquitination by COP1 and MDM2 thereby regulating the p53-dependent DNA repair. Plays a role in the regulation of the circadian clock and is essential for the generation and maintenance of circadian rhythms under constant light and for normal entrainment of behavior to light-dark (LD) cycles. Positively regulates the CLOCK-BMAL1 heterodimer mediated transcriptional activation of its own transcription and the transcription of CRY1. Regulates deacetylation of BMAL1 by regulating SIRT1 expression, resulting in derepressing CRY1-mediated transcription repression. With Tfcp2l1, promotes establishment and maintenance of pluripotency in embryonic stem cells (ESCs) and inhibits endoderm differentiation. In Mus musculus (Mouse), this protein is Metastasis-associated protein MTA1 (Mta1).